The primary structure comprises 51 residues: Sperm protamine P1 (51 aa).

2 disulfides stabilise this stretch: Cys-7-Cys-15 and Cys-38-Cys-48.

It belongs to the protamine P1 family. In terms of assembly, cross-linked by interchain disulfide bonds around the DNA-helix. Phosphorylated by SRPK1. Testis.

It is found in the nucleus. The protein resides in the chromosome. Its function is as follows. Protamines substitute for histones in the chromatin of sperm during the haploid phase of spermatogenesis. They compact sperm DNA into a highly condensed, stable and inactive complex. The chain is Sperm protamine P1 (Prm1) from Mus musculus (Mouse).